The following is a 416-amino-acid chain: MAQANLSETLFKPSFKHRETSTLVRRTRHDQETQGLHSTLEGEKTSSWYRMINRLMWIWRGVNPWEIEDVLSRIAASQADRSNEQLLDTVIGYRGGNWIYEWAKQGADWQQRATESGDDAQTGQFWLNAANLYSIAAYPHIKGDELAEQAQTLANRAYEEAAKYLPYELKELTFPIAGGGTLTGFLHMPSQGKAPFPTVLMCGSLETLQSDYHRLFQDYFAPAGMAMLTIDVPSVGFSSRWKLTQDSSFLHQQVLRALPDVPWVDHCRVTAFGFRFGANIAVRLAYLESQRLRGVACLGPVVHHLLSDPNRQQQVPDMFMDVLASRLGMPFSTDASLKTELGRYSLKTQGLLGRRCPTPMLAGYWENDLLCPKEEASLIVNSSAQGKLMPVNFSPVYQNFDRALQQISRWLQDKVC.

Residues 19-39 are disordered; it reads ETSTLVRRTRHDQETQGLHST.

This sequence belongs to the FrsA family.

It carries out the reaction a carboxylic ester + H2O = an alcohol + a carboxylate + H(+). In terms of biological role, catalyzes the hydrolysis of esters. The protein is Esterase FrsA of Pectobacterium atrosepticum (strain SCRI 1043 / ATCC BAA-672) (Erwinia carotovora subsp. atroseptica).